We begin with the raw amino-acid sequence, 115 residues long: NADH-ubiquinone oxidoreductase chain 3 (115 aa).

The next 3 helical transmembrane spans lie at 4-24 (LTAL…AFWL), 55-75 (FFLV…LLPL), and 87-107 (MMLT…YEWM).

The protein belongs to the complex I subunit 3 family. In terms of assembly, core subunit of respiratory chain NADH dehydrogenase (Complex I) which is composed of 45 different subunits. Interacts with TMEM186. Interacts with TMEM242.

It localises to the mitochondrion inner membrane. It carries out the reaction a ubiquinone + NADH + 5 H(+)(in) = a ubiquinol + NAD(+) + 4 H(+)(out). Core subunit of the mitochondrial membrane respiratory chain NADH dehydrogenase (Complex I) which catalyzes electron transfer from NADH through the respiratory chain, using ubiquinone as an electron acceptor. Essential for the catalytic activity of complex I. This chain is NADH-ubiquinone oxidoreductase chain 3, found in Peromyscus boylii (Brush deermouse).